Here is a 91-residue protein sequence, read N- to C-terminus: uncharacterized protein (91 aa).

Residues 12–34 traverse the membrane as a helical segment; sequence FAIVYANITFLFYYLLDFTLPFH.

It localises to the membrane. This is an uncharacterized protein from Saccharomyces cerevisiae (strain ATCC 204508 / S288c) (Baker's yeast).